The primary structure comprises 337 residues: MSRKYFEEEVIQQTLDYNYAQHSDADKFNIAYGIDKNFLFGCGVSIASVLLANPEKALAFHVFTDFFDSEDQQRFEALAKQYATQIVVYLIDCERLKSLPSTKNWTYATYFRFIIADYFSDKTDRVLYLDADIACKGSIQELIDLNFAENEIAAVVAEGELEWWTKRSVSLATPGLVSGYFNAGFILINIPLWTAENISKKAIEMLKDPEVVQRITHLDQDVLNIFLVNKARFVDKKFNTQFSLNYELKDSVINPVDAETVFVHYIGPTKPWHSWGAYPVSQYFLQAKSNSPWSHCALLNPVTSHQLRYAAKHMFNQKHYTSGINYYIAYFKRKLLE.

UDP contacts are provided by residues 33-38 (GIDKNF) and 130-131 (DA). The Mg(2+) site is built by D130 and D132. Short sequence motifs (DXD) lie at residues 130-132 (DAD) and 219-221 (DQD). H264 provides a ligand contact to Mg(2+). UDP is bound at residue 264 to 270 (HYIGPTK).

This sequence belongs to the glycosyltransferase 8 family. The cofactor is Mg(2+).

It catalyses the reaction UDP-alpha-D-galactose + [lipopolysaccharide] = UDP + 3-alpha-D-galactosyl-[lipopolysaccharide].. It functions in the pathway bacterial outer membrane biogenesis; LPS core biosynthesis. With respect to regulation, inhibited in a competitive manner by closely related nonsubstrate lipopolysaccharides. Galactosyltransferase involved in the biosynthesis of the core oligosaccharide region of lipopolysaccharide (LPS). Catalyzes the addition of an alpha l,3-linked galactose (galactose I) to the first outer-core glucose (glucose I). Cannot use UDP-glucose. Activity probably does not require the branched galactose added by WaaB, but it is higher in the presence of this branched galactose. This is Lipopolysaccharide 1,3-galactosyltransferase from Salmonella typhimurium (strain LT2 / SGSC1412 / ATCC 700720).